The chain runs to 308 residues: MLSNQPHKSVLLDEVIHNLNIKGDGNYLDLTVGFGGHSQHILEQLTTGTLTGNDMDKDSITFCTELFKDKKNVVLVHDNFANFFNHLKQLKVTKFDGILIDLGVSSYQLDKPERGFSFKHAGPFDMRMHQSDRVPTALDILERLSEEELTHVLKKFGEIAHPKPIAKALKTLINNTKNPTTVEVAETVKAAASNFEKYKSRNYLAKVFQAIRIYLNRELESLEIVLQHIPKLLNNKGRFLVIVFHSLEEKLVRNYIFKLTHFVQPPELPVKLTPPFELITKKPILPTEQEIKTNPRVRSAKLFVIEKK.

S-adenosyl-L-methionine-binding positions include 35–37 (GGH), aspartate 54, phenylalanine 80, aspartate 101, and glutamine 108.

This sequence belongs to the methyltransferase superfamily. RsmH family.

It localises to the cytoplasm. It catalyses the reaction cytidine(1402) in 16S rRNA + S-adenosyl-L-methionine = N(4)-methylcytidine(1402) in 16S rRNA + S-adenosyl-L-homocysteine + H(+). Functionally, specifically methylates the N4 position of cytidine in position 1402 (C1402) of 16S rRNA. The polypeptide is Ribosomal RNA small subunit methyltransferase H (Mycoplasma pneumoniae (strain ATCC 29342 / M129 / Subtype 1) (Mycoplasmoides pneumoniae)).